The following is a 202-amino-acid chain: 3-isopropylmalate dehydratase small subunit (202 aa).

This sequence belongs to the LeuD family. LeuD type 1 subfamily. In terms of assembly, heterodimer of LeuC and LeuD.

It carries out the reaction (2R,3S)-3-isopropylmalate = (2S)-2-isopropylmalate. It participates in amino-acid biosynthesis; L-leucine biosynthesis; L-leucine from 3-methyl-2-oxobutanoate: step 2/4. Its function is as follows. Catalyzes the isomerization between 2-isopropylmalate and 3-isopropylmalate, via the formation of 2-isopropylmaleate. The polypeptide is 3-isopropylmalate dehydratase small subunit (Novosphingobium aromaticivorans (strain ATCC 700278 / DSM 12444 / CCUG 56034 / CIP 105152 / NBRC 16084 / F199)).